The primary structure comprises 294 residues: MDFQVFIITGLSGAGKSQSLRILEDLGFFCVDNIPPKLVPTLIDLCLATNGKISGLAVVIDIRTENFLESFKEMVEIIKSRNIPYKILFLEAKDEVIVKRYNETRRIHPLLKEGGTILESIRLEKEKLWEIRNLATDIVNTSDFSIKELKEVILKIVTSLNTTVKPNFLITITSFGFKYGVPIDAHLVFDVRFLPNPFYDPKLRPFSGKSEEVRGFVLSKKEARDFIEHIKKLLDFLIPLYEEEGRTVLNIAIGCTGGRHRAVVIADEIFFYLAPKYNTHLLHRDIEKDVHILK.

10–17 (GLSGAGKS) is an ATP binding site. 61 to 64 (DIRT) contacts GTP.

Belongs to the RapZ-like family.

In terms of biological role, displays ATPase and GTPase activities. The chain is Nucleotide-binding protein Dtur_1129 from Dictyoglomus turgidum (strain DSM 6724 / Z-1310).